Here is a 116-residue protein sequence, read N- to C-terminus: UPF0122 protein CA_C1753 (116 aa).

The protein belongs to the UPF0122 family.

In terms of biological role, might take part in the signal recognition particle (SRP) pathway. This is inferred from the conservation of its genetic proximity to ftsY/ffh. May be a regulatory protein. The protein is UPF0122 protein CA_C1753 of Clostridium acetobutylicum (strain ATCC 824 / DSM 792 / JCM 1419 / IAM 19013 / LMG 5710 / NBRC 13948 / NRRL B-527 / VKM B-1787 / 2291 / W).